Reading from the N-terminus, the 205-residue chain is GTP cyclohydrolase-2 (205 aa).

A GTP-binding site is contributed by 49 to 53 (RIHSE). Zn(2+)-binding residues include C54, C65, and C67. GTP contacts are provided by residues Q70, 92–94 (EGR), and T114. Catalysis depends on D126, which acts as the Proton acceptor. R128 (nucleophile) is an active-site residue. Residues T149 and K154 each contribute to the GTP site.

It belongs to the GTP cyclohydrolase II family. The cofactor is Zn(2+).

It carries out the reaction GTP + 4 H2O = 2,5-diamino-6-hydroxy-4-(5-phosphoribosylamino)-pyrimidine + formate + 2 phosphate + 3 H(+). The protein operates within cofactor biosynthesis; riboflavin biosynthesis; 5-amino-6-(D-ribitylamino)uracil from GTP: step 1/4. In terms of biological role, catalyzes the conversion of GTP to 2,5-diamino-6-ribosylamino-4(3H)-pyrimidinone 5'-phosphate (DARP), formate and pyrophosphate. The protein is GTP cyclohydrolase-2 of Shewanella woodyi (strain ATCC 51908 / MS32).